The following is a 564-amino-acid chain: Ferric reductase transmembrane component 1 (564 aa).

Residue asparagine 4 is glycosylated (N-linked (GlcNAc...) asparagine). 2 consecutive transmembrane segments (helical) span residues 10 to 30 and 73 to 93; these read TVIA…MFWL and VILT…FIGM. Residue asparagine 111 is glycosylated (N-linked (GlcNAc...) asparagine). The chain crosses the membrane as a helical span at residues 117-137; sequence VAARLGFLACGLYVTSYFFSI. Residues 121 to 254 enclose the Ferric oxidoreductase domain; that stretch reads LGFLACGLYV…VYMKVCVAVY (134 aa). Heme contacts are provided by histidine 157 and histidine 171. Helical transmembrane passes span 160-180 and 193-213; these read LSQY…GLAA and IIGY…LPFF. 2 residues coordinate heme: histidine 225 and histidine 239. The FAD-binding FR-type domain maps to 255–410; it reads VFDRGCRMLR…DGPYGPVSNP (156 aa). A glycan (N-linked (GlcNAc...) asparagine) is linked at asparagine 268. 317–323 contacts FAD; it reads HPFTIAS. Asparagine 360 is a glycosylation site (N-linked (GlcNAc...) asparagine). 3 positions are modified to phosphoserine: serine 362, serine 381, and serine 383. Residues 417-437 form a helical membrane-spanning segment; it reads LFLFAGGVGVSYILPIILDTI. 419-427 lines the NAD(+) pocket; it reads LFAGGVGVS. Asparagine 501 carries an N-linked (GlcNAc...) asparagine glycan.

The protein belongs to the ferric reductase (FRE) family. Requires FAD as cofactor. Heme is required as a cofactor.

The protein localises to the cell membrane. It catalyses the reaction 2 a Fe(II)-siderophore + NADP(+) + H(+) = 2 a Fe(III)-siderophore + NADPH. Functionally, metalloreductase responsible for reducing extracellular iron and copper prior to import. Catalyzes the reductive uptake of Fe(3+)-salts and Fe(3+) bound to catecholate or hydroxamate siderophores. Fe(3+) is reduced to Fe(2+), which then dissociates from the siderophore and can be imported by the high-affinity Fe(2+) transport complex in the plasma membrane. Also participates in Cu(2+) reduction and Cu(+) uptake. The protein is Ferric reductase transmembrane component 1 (frp1) of Schizosaccharomyces pombe (strain 972 / ATCC 24843) (Fission yeast).